The chain runs to 142 residues: Large ribosomal subunit protein uL11 (142 aa).

It belongs to the universal ribosomal protein uL11 family. As to quaternary structure, part of the ribosomal stalk of the 50S ribosomal subunit. Interacts with L10 and the large rRNA to form the base of the stalk. L10 forms an elongated spine to which L12 dimers bind in a sequential fashion forming a multimeric L10(L12)X complex. One or more lysine residues are methylated.

Its function is as follows. Forms part of the ribosomal stalk which helps the ribosome interact with GTP-bound translation factors. This Thermobifida fusca (strain YX) protein is Large ribosomal subunit protein uL11.